The sequence spans 307 residues: Ribonuclease Z (307 aa).

Residues His-63, His-65, Asp-67, His-68, His-141, Asp-212, and His-270 each coordinate Zn(2+). Asp-67 serves as the catalytic Proton acceptor.

The protein belongs to the RNase Z family. In terms of assembly, homodimer. It depends on Zn(2+) as a cofactor.

It catalyses the reaction Endonucleolytic cleavage of RNA, removing extra 3' nucleotides from tRNA precursor, generating 3' termini of tRNAs. A 3'-hydroxy group is left at the tRNA terminus and a 5'-phosphoryl group is left at the trailer molecule.. Functionally, zinc phosphodiesterase, which displays some tRNA 3'-processing endonuclease activity. Probably involved in tRNA maturation, by removing a 3'-trailer from precursor tRNA. In Bacillus cereus (strain G9842), this protein is Ribonuclease Z.